Here is a 131-residue protein sequence, read N- to C-terminus: UPF0102 protein YraN (131 aa).

Over residues methionine 1–threonine 19 the composition is skewed to polar residues. A disordered region spans residues methionine 1–glycine 20.

This sequence belongs to the UPF0102 family.

This chain is UPF0102 protein YraN, found in Escherichia coli O17:K52:H18 (strain UMN026 / ExPEC).